The following is a 24-amino-acid chain: Brevinin-1BYa (24 aa).

A disulfide bridge links Cys-18 with Cys-24.

Expressed by the skin glands.

Its subcellular location is the secreted. Functionally, antibacterial activity against Gram-positive bacterium S.aureus and Gram-negative bacterium E.coli. High antifungal activity against C.albicans and a strong hemolytic activity. The chain is Brevinin-1BYa from Rana boylii (Foothill yellow-legged frog).